A 226-amino-acid chain; its full sequence is MDPGKEGLPRKPRFSAQQLHVGKWLSPFFFTCAVYFLLWIPDDQPSWVGALVKCLPVLSLVVFLRAVDAGGGYSARLQGALLCSAVGDACLVWPEAFLHGVAAFAAAHLLYLWAFGLTPLQPGLLLLVILAALPYYGLLLWHLPPDLVLALTAYSLALATMLWRGLARGGSTGWGALLFTLSDTTLAWNAFAQPLPHARLVVMTTYYSAQVLISLSVSQSPKLKPN.

The Cytoplasmic portion of the chain corresponds to 1–23 (MDPGKEGLPRKPRFSAQQLHVGK). The helical transmembrane segment at 24–40 (WLSPFFFTCAVYFLLWI) threads the bilayer. At 41 to 46 (PDDQPS) the chain is on the extracellular side. Residues 47 to 64 (WVGALVKCLPVLSLVVFL) form a helical membrane-spanning segment. The Cytoplasmic portion of the chain corresponds to 65 to 76 (RAVDAGGGYSAR). The chain crosses the membrane as a helical span at residues 77 to 93 (LQGALLCSAVGDACLVW). Residues 94–99 (PEAFLH) are Extracellular-facing. Residues 100-117 (GVAAFAAAHLLYLWAFGL) form a helical membrane-spanning segment. The Cytoplasmic segment spans residues 118 to 123 (TPLQPG). Residues 124 to 140 (LLLLVILAALPYYGLLL) traverse the membrane as a helical segment. The Extracellular segment spans residues 141–146 (WHLPPD). A helical transmembrane segment spans residues 147 to 163 (LVLALTAYSLALATMLW). Residues 164 to 171 (RGLARGGS) lie on the Cytoplasmic side of the membrane. Residues 172 to 188 (TGWGALLFTLSDTTLAW) traverse the membrane as a helical segment. Topologically, residues 189-199 (NAFAQPLPHAR) are extracellular. A helical transmembrane segment spans residues 200 to 217 (LVVMTTYYSAQVLISLSV). The Cytoplasmic portion of the chain corresponds to 218–226 (SQSPKLKPN).

Belongs to the TMEM86 family. In terms of assembly, homodimer.

It is found in the endoplasmic reticulum membrane. The protein resides in the cytoplasm. It catalyses the reaction a 1-O-(1Z-alkenyl)-sn-glycero-3-phosphocholine + H2O = a 2,3-saturated aldehyde + sn-glycerol 3-phosphocholine. The enzyme catalyses a 1-O-(1Z-alkenyl)-sn-glycero-3-phosphoethanolamine + H2O = a 2,3-saturated aldehyde + sn-glycero-3-phosphoethanolamine. Competitively inhibited by lysophosphatidic acid. Its function is as follows. Catalyzes the hydrolysis of the vinyl ether bond of choline or ethanolamine lysoplasmalogens, forming fatty aldehyde and glycerophosphocholine or glycerophosphoethanolamine, respectively and is specific for the sn-2-deacylated (lyso) form of plasmalogen. The protein is Lysoplasmalogenase TMEM86B (TMEM86B) of Sus scrofa (Pig).